Consider the following 117-residue polypeptide: Large ribosomal subunit protein bL20c (117 aa).

Belongs to the bacterial ribosomal protein bL20 family.

The protein resides in the plastid. Its subcellular location is the chloroplast. Its function is as follows. Binds directly to 23S ribosomal RNA and is necessary for the in vitro assembly process of the 50S ribosomal subunit. It is not involved in the protein synthesizing functions of that subunit. This is Large ribosomal subunit protein bL20c from Morus indica (Mulberry).